A 323-amino-acid chain; its full sequence is Ferrochelatase (323 aa).

The Fe cation site is built by H196 and E277.

Belongs to the ferrochelatase family.

It localises to the cytoplasm. The enzyme catalyses heme b + 2 H(+) = protoporphyrin IX + Fe(2+). It participates in porphyrin-containing compound metabolism; protoheme biosynthesis; protoheme from protoporphyrin-IX: step 1/1. In terms of biological role, catalyzes the ferrous insertion into protoporphyrin IX. In Haemophilus influenzae (strain 86-028NP), this protein is Ferrochelatase.